The chain runs to 56 residues: Large ribosomal subunit protein bL33 (56 aa).

This sequence belongs to the bacterial ribosomal protein bL33 family.

This Orientia tsutsugamushi (strain Ikeda) (Rickettsia tsutsugamushi) protein is Large ribosomal subunit protein bL33.